The sequence spans 143 residues: MFLGEYEHTIDDKGRLAIPARFRDALSEGVVITRGFDRCLMGFPRGVWEELARQVSSLPIGSEETRQLQRMLFSGAADMSLDRQGRILIPQNLREFAELGDQAVIAGLNRHFEIWSPRRWQNVLSAMDANASLFAQKLAELRF.

2 consecutive SpoVT-AbrB domains span residues 5 to 47 and 76 to 119; these read EYEH…PRGV and AADM…SPRR.

It belongs to the MraZ family. As to quaternary structure, forms oligomers.

It localises to the cytoplasm. It is found in the nucleoid. The polypeptide is Transcriptional regulator MraZ (Roseiflexus castenholzii (strain DSM 13941 / HLO8)).